Consider the following 499-residue polypeptide: FAD-dependent oxidoreductase domain-containing protein 1 (499 aa).

Residues Glu75–Leu95 traverse the membrane as a helical segment.

Requires FAD as cofactor.

It is found in the mitochondrion inner membrane. Required for the assembly of the mitochondrial membrane respiratory chain NADH dehydrogenase (Complex I). Involved in mid-late stages of complex I assembly. This Xenopus laevis (African clawed frog) protein is FAD-dependent oxidoreductase domain-containing protein 1 (foxred1).